The following is a 146-amino-acid chain: Chorion class A protein Ld3/Ld29 (146 aa).

The first 21 residues, 1–21 (MNTFALLSVFIQACLVQSVFS), serve as a signal peptide directing secretion.

Belongs to the chorion protein family.

Functionally, this protein is one of many from the eggshell of the gypsy moth. This Lymantria dispar (Gypsy moth) protein is Chorion class A protein Ld3/Ld29.